A 503-amino-acid chain; its full sequence is Maturase K (503 aa).

It belongs to the intron maturase 2 family. MatK subfamily.

The protein resides in the plastid. Its subcellular location is the chloroplast. Functionally, usually encoded in the trnK tRNA gene intron. Probably assists in splicing its own and other chloroplast group II introns. The protein is Maturase K of Aethionema cordifolium (Lebanon stonecress).